The primary structure comprises 362 residues: Probable dual-specificity RNA methyltransferase RlmN (362 aa).

Residue E105 is the Proton acceptor of the active site. A Radical SAM core domain is found at 111-344 (HNYGNSVCVT…VTIRREQGHD (234 aa)). A disulfide bond links C118 and C349. Positions 125, 129, and 132 each coordinate [4Fe-4S] cluster. S-adenosyl-L-methionine-binding positions include 175–176 (GE), S207, 230–232 (SLH), and N306. Residue C349 is the S-methylcysteine intermediate of the active site.

Belongs to the radical SAM superfamily. RlmN family. The cofactor is [4Fe-4S] cluster.

The protein localises to the cytoplasm. It carries out the reaction adenosine(2503) in 23S rRNA + 2 reduced [2Fe-2S]-[ferredoxin] + 2 S-adenosyl-L-methionine = 2-methyladenosine(2503) in 23S rRNA + 5'-deoxyadenosine + L-methionine + 2 oxidized [2Fe-2S]-[ferredoxin] + S-adenosyl-L-homocysteine. The catalysed reaction is adenosine(37) in tRNA + 2 reduced [2Fe-2S]-[ferredoxin] + 2 S-adenosyl-L-methionine = 2-methyladenosine(37) in tRNA + 5'-deoxyadenosine + L-methionine + 2 oxidized [2Fe-2S]-[ferredoxin] + S-adenosyl-L-homocysteine. Specifically methylates position 2 of adenine 2503 in 23S rRNA and position 2 of adenine 37 in tRNAs. The protein is Probable dual-specificity RNA methyltransferase RlmN of Halalkalibacterium halodurans (strain ATCC BAA-125 / DSM 18197 / FERM 7344 / JCM 9153 / C-125) (Bacillus halodurans).